Consider the following 204-residue polypeptide: Somatotropin (204 aa).

Residues 1–17 (MDRVLLLLSVLSLGVSS) form the signal peptide. Position 18 is a pyrrolidone carboxylic acid (glutamine 18). Position 36 (histidine 36) interacts with Zn(2+). A disulfide bond links cysteine 69 and cysteine 177. Glutamate 186 contacts Zn(2+). A disulfide bridge links cysteine 194 with cysteine 202.

The protein belongs to the somatotropin/prolactin family.

It is found in the secreted. Growth hormone plays an important role in growth control and is involved in the regulation of several anabolic processes. Implicated as an osmoregulatory substance important for seawater adaptation. The protein is Somatotropin (gh) of Sciaenops ocellatus (Red drum).